The sequence spans 367 residues: Cell division protein FtsZ (367 aa).

Residues 17–21, 104–106, Glu-135, Lys-139, and Asp-183 contribute to the GTP site; these read GGGSN and GTG.

This sequence belongs to the FtsZ family. As to quaternary structure, homodimer. Polymerizes to form a dynamic ring structure in a strictly GTP-dependent manner. Interacts directly with several other division proteins.

Its subcellular location is the cytoplasm. Functionally, essential cell division protein that forms a contractile ring structure (Z ring) at the future cell division site. The regulation of the ring assembly controls the timing and the location of cell division. One of the functions of the FtsZ ring is to recruit other cell division proteins to the septum to produce a new cell wall between the dividing cells. Binds GTP and shows GTPase activity. The protein is Cell division protein FtsZ of Aquifex aeolicus (strain VF5).